An 873-amino-acid chain; its full sequence is Bifunctional uridylyltransferase/uridylyl-removing enzyme (873 aa).

Residues 1–332 (MKYLSPLSLS…HQGEQDDAII (332 aa)) form a uridylyltransferase region. The uridylyl-removing stretch occupies residues 333 to 692 (IDDDFQRRGR…ISKNASRGGT (360 aa)). The region spanning 451-573 (VDEHSIRLLK…VRDEERLDYL (123 aa)) is the HD domain. 2 consecutive ACT domains span residues 693-777 (EIFV…RPPR) and 800-873 (LMEF…RLSS).

The protein belongs to the GlnD family. Requires Mg(2+) as cofactor.

It catalyses the reaction [protein-PII]-L-tyrosine + UTP = [protein-PII]-uridylyl-L-tyrosine + diphosphate. The catalysed reaction is [protein-PII]-uridylyl-L-tyrosine + H2O = [protein-PII]-L-tyrosine + UMP + H(+). Its activity is regulated as follows. Uridylyltransferase (UTase) activity is inhibited by glutamine, while glutamine activates uridylyl-removing (UR) activity. Its function is as follows. Modifies, by uridylylation and deuridylylation, the PII regulatory proteins (GlnB and homologs), in response to the nitrogen status of the cell that GlnD senses through the glutamine level. Under low glutamine levels, catalyzes the conversion of the PII proteins and UTP to PII-UMP and PPi, while under higher glutamine levels, GlnD hydrolyzes PII-UMP to PII and UMP (deuridylylation). Thus, controls uridylylation state and activity of the PII proteins, and plays an important role in the regulation of nitrogen assimilation and metabolism. This chain is Bifunctional uridylyltransferase/uridylyl-removing enzyme, found in Aliivibrio fischeri (strain MJ11) (Vibrio fischeri).